Consider the following 563-residue polypeptide: Proton channel OTOP2 (563 aa).

Residues M1–P20 are disordered. A run of 12 helical transmembrane segments spans residues L30–G50, V62–L82, P100–F120, I137–S157, L173–V193, F242–M262, F290–L310, A325–L345, L373–V393, L403–I423, D496–A516, and F528–Y548.

It belongs to the otopetrin family. In terms of tissue distribution, expressed at higher level in stomach, testis and olfactory bulb.

It localises to the cell membrane. The enzyme catalyses H(+)(in) = H(+)(out). With respect to regulation, actives at neutral and alkaline extracellular pH, acid extracellular pH appears to inhibit the channel. Insensitive to activation by Zn(2+). Functionally, proton-selective ion channel open at neutral pH. Actives at neutral and alkaline extracellular pH, likely participates in some alkali-related physiological activities. The chain is Proton channel OTOP2 from Mus musculus (Mouse).